The sequence spans 118 residues: Small ribosomal subunit protein uS13 (118 aa).

The disordered stretch occupies residues 93 to 118 (RNLPVRGQNTKNNARTRKGPTRPLKR). A compositionally biased stretch (basic residues) spans 106 to 118 (ARTRKGPTRPLKR).

It belongs to the universal ribosomal protein uS13 family. In terms of assembly, part of the 30S ribosomal subunit. Forms a loose heterodimer with protein S19. Forms two bridges to the 50S subunit in the 70S ribosome.

Its function is as follows. Located at the top of the head of the 30S subunit, it contacts several helices of the 16S rRNA. In the 70S ribosome it contacts the 23S rRNA (bridge B1a) and protein L5 of the 50S subunit (bridge B1b), connecting the 2 subunits; these bridges are implicated in subunit movement. Contacts the tRNAs in the A and P-sites. This chain is Small ribosomal subunit protein uS13, found in Psychrobacter cryohalolentis (strain ATCC BAA-1226 / DSM 17306 / VKM B-2378 / K5).